Consider the following 418-residue polypeptide: Glutamyl-tRNA reductase (418 aa).

Substrate-binding positions include 49–52 (TCNR), Ser109, 114–116 (EPQ), and Gln120. Catalysis depends on Cys50, which acts as the Nucleophile. Position 189–194 (189–194 (GAGETI)) interacts with NADP(+).

The protein belongs to the glutamyl-tRNA reductase family. As to quaternary structure, homodimer.

It carries out the reaction (S)-4-amino-5-oxopentanoate + tRNA(Glu) + NADP(+) = L-glutamyl-tRNA(Glu) + NADPH + H(+). Its pathway is porphyrin-containing compound metabolism; protoporphyrin-IX biosynthesis; 5-aminolevulinate from L-glutamyl-tRNA(Glu): step 1/2. Functionally, catalyzes the NADPH-dependent reduction of glutamyl-tRNA(Glu) to glutamate 1-semialdehyde (GSA). In Shigella dysenteriae serotype 1 (strain Sd197), this protein is Glutamyl-tRNA reductase.